A 129-amino-acid polypeptide reads, in one-letter code: Small ribosomal subunit protein uS11 (129 aa).

It belongs to the universal ribosomal protein uS11 family. Part of the 30S ribosomal subunit. Interacts with proteins S7 and S18. Binds to IF-3.

Its function is as follows. Located on the platform of the 30S subunit, it bridges several disparate RNA helices of the 16S rRNA. Forms part of the Shine-Dalgarno cleft in the 70S ribosome. The protein is Small ribosomal subunit protein uS11 of Francisella tularensis subsp. mediasiatica (strain FSC147).